Reading from the N-terminus, the 238-residue chain is Survival of motor neuron-related-splicing factor 30 (238 aa).

The region spanning 72 to 132 (SWKVGDKCMA…KPVEEGRKAK (61 aa)) is the Tudor domain. The short motif at 142 to 160 (KKEMIAQQREYKKKKALKK) is the Nuclear localization signal element. Ser-201 bears the Phosphoserine mark. Lys-219 is subject to N6-acetyllysine.

Belongs to the SMN family. In terms of assembly, associates with spliceosomes. Associates with U4/U5/U6 tri-snRNP and with U2 snRNP.

Its subcellular location is the nucleus speckle. It localises to the nucleus. The protein localises to the cajal body. Involved in spliceosome assembly. The polypeptide is Survival of motor neuron-related-splicing factor 30 (Smndc1) (Mus musculus (Mouse)).